The sequence spans 186 residues: Lactoylglutathione lyase (186 aa).

Residues 28 to 175 (FMQQTMFRIK…DGYWIELFDR (148 aa)) enclose the VOC domain. Gln-31 and Arg-35 together coordinate substrate. Gln-31 provides a ligand contact to Zn(2+). Glu-97 contacts Zn(2+). Substrate is bound by residues Asn-101, Arg-121, His-125, and 155–156 (KM). His-125 lines the Zn(2+) pocket. Glu-171 contacts Zn(2+). The Proton donor/acceptor role is filled by Glu-171.

It belongs to the glyoxalase I family. Zn(2+) serves as cofactor.

The catalysed reaction is (R)-S-lactoylglutathione = methylglyoxal + glutathione. The protein operates within secondary metabolite metabolism; methylglyoxal degradation; (R)-lactate from methylglyoxal: step 1/2. In terms of biological role, catalyzes the conversion of hemimercaptal, formed from methylglyoxal and glutathione, to S-lactoylglutathione. The protein is Lactoylglutathione lyase of Cicer arietinum (Chickpea).